The chain runs to 160 residues: Cytochrome b6-f complex subunit 4 (160 aa).

The next 3 helical transmembrane spans lie at 36–56 (LLYI…GLAV), 95–115 (LLGV…PFLE), and 131–151 (TVFL…TLPI).

It belongs to the cytochrome b family. PetD subfamily. In terms of assembly, the 4 large subunits of the cytochrome b6-f complex are cytochrome b6, subunit IV (17 kDa polypeptide, petD), cytochrome f and the Rieske protein, while the 4 small subunits are petG, petL, petM and petN. The complex functions as a dimer.

It localises to the plastid. The protein localises to the chloroplast thylakoid membrane. In terms of biological role, component of the cytochrome b6-f complex, which mediates electron transfer between photosystem II (PSII) and photosystem I (PSI), cyclic electron flow around PSI, and state transitions. In Gossypium barbadense (Sea Island cotton), this protein is Cytochrome b6-f complex subunit 4.